Here is a 205-residue protein sequence, read N- to C-terminus: High frequency lysogenization protein HflD homolog (205 aa).

It belongs to the HflD family.

The protein resides in the cytoplasm. Its subcellular location is the cell inner membrane. In Alkalilimnicola ehrlichii (strain ATCC BAA-1101 / DSM 17681 / MLHE-1), this protein is High frequency lysogenization protein HflD homolog.